A 335-amino-acid chain; its full sequence is Cytochrome c biogenesis protein CcsA (335 aa).

Transmembrane regions (helical) follow at residues Phe-15 to Thr-35, Trp-36 to Leu-56, Leu-68 to Val-88, Leu-97 to Leu-117, Val-142 to Val-162, Ile-243 to Asn-263, Trp-278 to Trp-298, and Ala-304 to Leu-324.

It belongs to the CcmF/CycK/Ccl1/NrfE/CcsA family. May interact with ccs1.

It is found in the cellular thylakoid membrane. In terms of biological role, required during biogenesis of c-type cytochromes (cytochrome c6 and cytochrome f) at the step of heme attachment. This Crocosphaera subtropica (strain ATCC 51142 / BH68) (Cyanothece sp. (strain ATCC 51142)) protein is Cytochrome c biogenesis protein CcsA.